Consider the following 136-residue polypeptide: Pleckstrin homology-like domain family A member 2 (136 aa).

Residues 12–105 (ILKEGDLEKR…WNAEITLALV (94 aa)) form the PH domain.

Belongs to the PHLDA2 family.

Its subcellular location is the cytoplasm. The protein localises to the membrane. In terms of biological role, plays a role in regulating placenta growth. May act via its PH domain that competes with other PH domain-containing proteins, thereby preventing their binding to membrane lipids. This Xenopus tropicalis (Western clawed frog) protein is Pleckstrin homology-like domain family A member 2 (phlda2).